The chain runs to 151 residues: Minor curlin subunit (151 aa).

Positions 1 to 21 are cleaved as a signal peptide; the sequence is MKNKLLFMMLTILGAPGIAAA.

It belongs to the CsgA/CsgB family.

The protein resides in the fimbrium. Curlin is the structural subunit of the curli. Curli are coiled surface structures that assemble preferentially at growth temperatures below 37 degrees Celsius. Curli can bind to fibronectin. The minor subunit is the nucleation component of curlin monomers. This Escherichia coli O157:H7 protein is Minor curlin subunit (csgB).